We begin with the raw amino-acid sequence, 207 residues long: LexA repressor (207 aa).

Residues 28 to 48 (VREIGEAVGLASSSTVHGHLS) constitute a DNA-binding region (H-T-H motif). Residues Ser130 and Lys168 each act as for autocatalytic cleavage activity in the active site.

This sequence belongs to the peptidase S24 family. In terms of assembly, homodimer.

The catalysed reaction is Hydrolysis of Ala-|-Gly bond in repressor LexA.. Its function is as follows. Represses a number of genes involved in the response to DNA damage (SOS response), including recA and lexA. In the presence of single-stranded DNA, RecA interacts with LexA causing an autocatalytic cleavage which disrupts the DNA-binding part of LexA, leading to derepression of the SOS regulon and eventually DNA repair. The protein is LexA repressor of Staphylococcus haemolyticus (strain JCSC1435).